A 546-amino-acid polypeptide reads, in one-letter code: Aladin (546 aa).

An N-acetylcysteine modification is found at cysteine 2. Position 33 is a phosphoserine (serine 33). WD repeat units follow at residues 149-188 (WSSC…VPSL), 191-230 (RLQR…LSTR), 243-282 (GHTP…CVPL), and 285-324 (FRGG…CEAW). Phosphoserine is present on residues serine 495, serine 511, serine 522, serine 525, and serine 541. The tract at residues 500-546 (RAQEPPAGGGGSIHEVPLFTETSPTSAPWDPLPGQSSAQPHSPHSHL) is disordered. The segment covering 534–546 (QSSAQPHSPHSHL) has biased composition (low complexity). The short motif at 544 to 546 (SHL) is the Microbody targeting signal element.

Interacts with NDC1, the interaction is required for nuclear pore localization. Interacts with the inactive form aurora kinase AURKA. Interacts with PGRMC2. As to expression, widely expressed. Particularly abundant in cerebellum, corpus callosum, adrenal gland, pituitary gland, gastrointestinal structures and fetal lung.

It is found in the nucleus. Its subcellular location is the nuclear pore complex. It localises to the cytoplasm. The protein resides in the cytoskeleton. The protein localises to the spindle pole. It is found in the nucleus envelope. Functionally, plays a role in the normal development of the peripheral and central nervous system. Required for the correct localization of aurora kinase AURKA and the microtubule minus end-binding protein NUMA1 as well as a subset of AURKA targets which ensures proper spindle formation and timely chromosome alignment. The protein is Aladin (Aaas) of Mus musculus (Mouse).